A 130-amino-acid polypeptide reads, in one-letter code: Methylglyoxal synthase (130 aa).

Residues 1 to 130 (MSKPRIALIA…DLARNMQDVC (130 aa)) form the MGS-like domain. Substrate contacts are provided by residues H11, K15, 37-40 (TGTT), and 57-58 (SG). The Proton donor/acceptor role is filled by D63. Residue H90 participates in substrate binding.

The protein belongs to the methylglyoxal synthase family.

The enzyme catalyses dihydroxyacetone phosphate = methylglyoxal + phosphate. Its function is as follows. Catalyzes the formation of methylglyoxal from dihydroxyacetone phosphate. In Burkholderia lata (strain ATCC 17760 / DSM 23089 / LMG 22485 / NCIMB 9086 / R18194 / 383), this protein is Methylglyoxal synthase.